Consider the following 1447-residue polypeptide: Bud site selection protein 4 (1447 aa).

Residues 1–16 (MHDAESTVDSLLKEID) are compositionally biased toward basic and acidic residues. 2 disordered regions span residues 1-38 (MHDA…PHNW) and 57-76 (NTRS…KMST). S10 carries the post-translational modification Phosphoserine. Composition is skewed to polar residues over residues 22–32 (TKSNITQNGSE) and 59–76 (RSNA…KMST). Phosphoserine is present on residues S78, S81, S91, S96, and S167. The segment at 272 to 316 (NLPSKLLNTSNNSHSDSRSPTASVEDLNISTNLPGADSSQNNPVT) is disordered. Over residues 277 to 316 (LLNTSNNSHSDSRSPTASVEDLNISTNLPGADSSQNNPVT) the composition is skewed to polar residues. T365 carries the phosphothreonine modification. Phosphoserine is present on S367. The segment at 444-479 (HQESEHANEQPAIIPQKDSSEETFTELNNESEFQRN) is disordered. A Phosphoserine modification is found at S511. A disordered region spans residues 529 to 591 (KTSAEEHDLS…NEEPEHVPLL (63 aa)). Polar residues predominate over residues 538–548 (SSSCEDQSVSE). A compositionally biased stretch (basic and acidic residues) spans 549 to 580 (ARNKDRIEEKEVETKDENIETEKDESEYHKVE). Position 616 is a phosphoserine (S616). Over residues 648–664 (ANSQFSQQSSITTASTV) the composition is skewed to polar residues. Residues 648-673 (ANSQFSQQSSITTASTVDSKKDNGST) form a disordered region. The segment at 768-879 (EHENIPLSTH…SLWESSYELK (112 aa)) is interaction with IQG1. 2 positions are modified to phosphoserine: S805 and S811. Residues 1302 to 1413 (NIYKEGYLLQ…WYNKLQEVVE (112 aa)) form the PH domain.

In terms of assembly, interacts with AXL1, AXL2, IQG1 and SEC3. Post-translationally, phosphorylated by CDC28.

It localises to the bud neck. Its function is as follows. Required for establishment of the axial budding pattern in haploid cells. Cooperates with other bud site selection proteins to recognize a spatial landmark during mitosis and they subsequently become a landmark for downstream polarity establishment factors that coordinate axial budding and cytokinesis. Involved in the septin organization at the bud neck. The chain is Bud site selection protein 4 (BUD4) from Saccharomyces cerevisiae (strain ATCC 204508 / S288c) (Baker's yeast).